A 257-amino-acid polypeptide reads, in one-letter code: uncharacterized protein (257 aa).

A helical membrane pass occupies residues 6–26 (IFWLNLAAIIIISIVVSGGMF).

Belongs to the staphylococcal tandem lipoprotein family.

It is found in the cell membrane. This is an uncharacterized protein from Staphylococcus aureus (strain N315).